The following is a 459-amino-acid chain: MIKNGLPHEPEFQQAYNELVSALEESTLFTEKPEYKKVIPVVSIPERIIQFRVAWENDNGDVEVNNGFRVQFNSSLGPYKGGLRFHPSVNLSILKFLGFEQIFKNALTGLSMGGGKGGCDFNPKGRSDGEIRRFCVAFMRQLARYIGADTDVPAGDIGVGGREIGYLFGAYKQMQNNWYGVLTGKGLTWGGSLIRPEATGYVSFTTLKKMIEKATNGKESFKGKRVELSGSGNVAQYAALKVIELGGIVVSLSDSKGSIVSKNGIVPEQVLEIAAAKLKFKSLEEITKESVKLFSGENSVEYLAGVRPWAKVGHFDVALPSATQKEVSGEEEAKALVEAGCKYIAEGSNMGSTKEAIDVFEANRSNNVWYAPGKAANCGGVAVSGLEMAQNSQRVQWSAEEVDAKLKNIMYTCFDNCYDPAIKYSAEKNADGLPSLLKGANIASFIKVADAMFDQGDVY.

The active site involves Lys-116.

Belongs to the Glu/Leu/Phe/Val dehydrogenases family. As to quaternary structure, homohexamer.

The catalysed reaction is L-glutamate + NADP(+) + H2O = 2-oxoglutarate + NH4(+) + NADPH + H(+). The polypeptide is NADP-specific glutamate dehydrogenase (GDHA) (Schwanniomyces occidentalis (Yeast)).